A 102-amino-acid chain; its full sequence is Trans-acting regulatory protein HvrA (102 aa).

The DNA-binding element occupies 80 to 85 (RGRKPK).

Belongs to the histone-like protein H-NS family. As to quaternary structure, homodimer that oligomerizes on DNA into higher-order complexes that form bridges between disparate regions of DNA compacting it.

It localises to the cytoplasm. The protein resides in the nucleoid. Functionally, a dim-light trans-acting activator of Puf and Puh expression, that has no effect on the expression of the Puc operon. Responsible for regulating light-harvesting-I and reaction center structural gene expression differentially from that of light-harvesting-II expression in response to alterations in light. Proper light regulation of light-harvesting and reaction center polypeptide synthesis is an important physiological trait that enables cells to adapt to ever-changing environmental conditions of light intensity. This is Trans-acting regulatory protein HvrA (hvrA) from Rhodobacter capsulatus (Rhodopseudomonas capsulata).